Reading from the N-terminus, the 891-residue chain is Microtubule-associated protein 10 (891 aa).

Disordered regions lie at residues 325 to 355 (AAVQ…PPQI), 401 to 457 (EDKG…VTKG), 504 to 679 (SWKG…KSSC), and 702 to 844 (TTEN…SNLS). Over residues 407 to 417 (PSTKSTSPSES) the composition is skewed to low complexity. Polar residues-rich tracts occupy residues 509–520 (VSSSAAESQMSP) and 527–544 (PTDS…SQLP). Basic and acidic residues-rich tracts occupy residues 577-592 (STTK…KQEM) and 645-658 (TVDK…DGRQ). Composition is skewed to polar residues over residues 665–679 (ADTS…KSSC), 702–718 (TTEN…SSTG), 726–749 (SRAS…SSVL), 776–790 (EASS…SQWT), and 826–844 (KSQS…SNLS).

In terms of assembly, interacts (via middle region) with microtubules.

It localises to the cytoplasm. Its subcellular location is the cytoskeleton. The protein resides in the spindle pole. It is found in the microtubule organizing center. The protein localises to the centrosome. It localises to the midbody. In terms of biological role, microtubule-associated protein (MAP) that plays a role in the regulation of cell division; promotes microtubule stability and participates in the organization of the spindle midzone and normal progress of cytokinesis. In Mus musculus (Mouse), this protein is Microtubule-associated protein 10 (Map10).